A 331-amino-acid polypeptide reads, in one-letter code: Large ribosomal subunit protein uL3 (331 aa).

The protein belongs to the universal ribosomal protein uL3 family. In terms of assembly, part of the 50S ribosomal subunit. Forms a cluster with proteins L14 and L24e.

Functionally, one of the primary rRNA binding proteins, it binds directly near the 3'-end of the 23S rRNA, where it nucleates assembly of the 50S subunit. This is Large ribosomal subunit protein uL3 from Thermoplasma volcanium (strain ATCC 51530 / DSM 4299 / JCM 9571 / NBRC 15438 / GSS1).